Reading from the N-terminus, the 368-residue chain is RNA polymerase sigma factor SigA (368 aa).

Residues 16 to 90 form a sigma-70 factor domain-1 region; the sequence is TLTLEDVKKQ…KLNPSDLSAP (75 aa). Residues 69–90 form a disordered region; it reads LVNEKDSSDTDEKLNPSDLSAP. A compositionally biased stretch (basic and acidic residues) spans 71 to 83; sequence NEKDSSDTDEKLN. The segment at 135–205 is sigma-70 factor domain-2; it reads LAEANLRLVV…TRAIADQART (71 aa). The Interaction with polymerase core subunit RpoC motif lies at 159-162; sequence DLIQ. The sigma-70 factor domain-3 stretch occupies residues 214–291; the sequence is ETINKLIRVQ…QEAQSPSDHA (78 aa). Residues 303-356 are sigma-70 factor domain-4; sequence VLDTLTDREENVLRLRFGLDDGRTRTLEEVGKVFGVTRERIRQIEAKALRKLRH. A DNA-binding region (H-T-H motif) is located at residues 329–348; it reads LEEVGKVFGVTRERIRQIEA.

It belongs to the sigma-70 factor family. RpoD/SigA subfamily. In terms of assembly, interacts transiently with the RNA polymerase catalytic core formed by RpoA, RpoB, RpoC and RpoZ (2 alpha, 1 beta, 1 beta' and 1 omega subunit) to form the RNA polymerase holoenzyme that can initiate transcription. Interacts (via sigma-70 factor domain 4) with the phage G1 protein gp67; this inhibits rRNA synthesis. Interaction with phage G1 protein gp67 does not inhibit transcription in general, but selectively inhibits transcription from promoters that require interaction of the RNA polymerase alpha subunit with DNA sequences upstream of the -35 promoter element.

It localises to the cytoplasm. Its function is as follows. Sigma factors are initiation factors that promote the attachment of RNA polymerase to specific initiation sites and are then released. This sigma factor is the primary sigma factor during exponential growth. The sequence is that of RNA polymerase sigma factor SigA from Staphylococcus aureus (strain NCTC 8325 / PS 47).